Consider the following 397-residue polypeptide: Nuclear pore complex-interacting protein family member B2 (397 aa).

Positions 256–397 (NRMGHQPPPP…KLRTGHCTQA (142 aa)) are disordered. Residues 267–277 (QQHSITDNSLS) are compositionally biased toward polar residues. Over residues 278–287 (LKTPPECLLT) the composition is skewed to low complexity. A compositionally biased stretch (basic residues) spans 382-391 (KRRRLSKLRT).

The protein belongs to the NPIP family.

The protein resides in the nucleus. This is Nuclear pore complex-interacting protein family member B2 from Homo sapiens (Human).